A 34-amino-acid chain; its full sequence is Photosystem I reaction center subunit XII (34 aa).

The chain crosses the membrane as a helical span at residues 10–32 (IFIALVVAAHAGVLAVRLCVSLY).

Belongs to the PsaM family.

It is found in the cellular thylakoid membrane. This Synechococcus sp. (strain WH7803) protein is Photosystem I reaction center subunit XII.